The following is a 384-amino-acid chain: Spermidine/putrescine import ATP-binding protein PotA (384 aa).

One can recognise an ABC transporter domain in the interval 6–238 (IAFQNVSKVF…PINHFVATFI (233 aa)). Position 40-47 (40-47 (GASGSGKS)) interacts with ATP.

Belongs to the ABC transporter superfamily. Spermidine/putrescine importer (TC 3.A.1.11.1) family. In terms of assembly, the complex is composed of two ATP-binding proteins (PotA), two transmembrane proteins (PotB and PotC) and a solute-binding protein (PotD).

The protein resides in the cell membrane. The enzyme catalyses ATP + H2O + polyamine-[polyamine-binding protein]Side 1 = ADP + phosphate + polyamineSide 2 + [polyamine-binding protein]Side 1.. Functionally, part of the ABC transporter complex PotABCD involved in spermidine/putrescine import. Responsible for energy coupling to the transport system. This is Spermidine/putrescine import ATP-binding protein PotA from Streptococcus thermophilus (strain ATCC BAA-491 / LMD-9).